Consider the following 781-residue polypeptide: Arf-GAP with coiled-coil, ANK repeat and PH domain-containing protein 2 (781 aa).

Residues 1–226 (MKVTVDFEEC…MKDLGAQLDQ (226 aa)) enclose the BAR domain. One can recognise a PH domain in the interval 266–361 (GIVMEGYLFK…WIKAVQTSIA (96 aa)). The span at 365-378 (REKGDESEKQEKKS) shows a compositional bias: basic and acidic residues. The tract at residues 365 to 390 (REKGDESEKQEKKSSPSTGSLESGSE) is disordered. A compositionally biased stretch (low complexity) spans 379-388 (SPSTGSLESG). An Arf-GAP domain is found at 399 to 521 (ESALQRVQCI…KFVEKQPAAA (123 aa)). The C4-type zinc-finger motif lies at 414 to 437 (CCDCGLADPRWASINLGITLCIEC). The disordered stretch occupies residues 520-576 (AAVSPLESRTKVLPQSQEEKRHSAPEKSFLAIEQGAASPRVRSSDSGIQQSVDDSRE). ANK repeat units follow at residues 642–671 (NKAT…NVNI), 675–704 (KGRG…NQHA), and 708–737 (DGKD…NEEM).

It localises to the endosome membrane. The protein localises to the cell membrane. With respect to regulation, GAP activity stimulated by phosphatidylinositol 4,5-bisphosphate (PIP2) and phosphatidic acid. GTPase-activating protein (GAP) for ADP ribosylation factor 6 (ARF6). The polypeptide is Arf-GAP with coiled-coil, ANK repeat and PH domain-containing protein 2 (ACAP2) (Gallus gallus (Chicken)).